A 244-amino-acid chain; its full sequence is rRNA adenine N-6-methyltransferase (244 aa).

S-adenosyl-L-methionine is bound by residues Asn11, Ile13, Gly38, Glu59, Asp84, and Asn101.

Belongs to the class I-like SAM-binding methyltransferase superfamily. rRNA adenine N(6)-methyltransferase family.

It catalyses the reaction adenosine(2085) in 23S rRNA + 2 S-adenosyl-L-methionine = N(6)-dimethyladenosine(2085) in 23S rRNA + 2 S-adenosyl-L-homocysteine + 2 H(+). Its function is as follows. This protein produces a dimethylation of the adenine residue at position 2085 in 23S rRNA, resulting in reduced affinity between ribosomes and macrolide-lincosamide-streptogramin B antibiotics. The chain is rRNA adenine N-6-methyltransferase (ermC') from Bacillus subtilis.